The following is a 217-amino-acid chain: MQDTTLHIRHLGKQDYESVWHAMQHYTDTRDSESHDELWIVEHPPVFTQGQAGKSEHILNAGDIPVIQVDRGGQVTYHGPGQLVVYPLLDIKRSKVGVRQLVTHIEQSIVDMLAKYDINAYAKADAPGVYVDERKIASLGLRIRKGCSFHGLALNVDMDLAPFRRINPCGYAGLEMAQCKALGGPQTVIEAGEQLTITFSQLLGYQHLVHHQGLAAS.

The region spanning 32–207 (SESHDELWIV…TFSQLLGYQH (176 aa)) is the BPL/LPL catalytic domain. Residues 71–78 (RGGQVTYH), 138–140 (SLG), and 151–153 (GLA) each bind substrate. Cys-169 (acyl-thioester intermediate) is an active-site residue.

It belongs to the LipB family.

The protein resides in the cytoplasm. The enzyme catalyses octanoyl-[ACP] + L-lysyl-[protein] = N(6)-octanoyl-L-lysyl-[protein] + holo-[ACP] + H(+). It functions in the pathway protein modification; protein lipoylation via endogenous pathway; protein N(6)-(lipoyl)lysine from octanoyl-[acyl-carrier-protein]: step 1/2. Functionally, catalyzes the transfer of endogenously produced octanoic acid from octanoyl-acyl-carrier-protein onto the lipoyl domains of lipoate-dependent enzymes. Lipoyl-ACP can also act as a substrate although octanoyl-ACP is likely to be the physiological substrate. In Shewanella baltica (strain OS223), this protein is Octanoyltransferase.